The chain runs to 475 residues: Cobyric acid synthase (475 aa).

The GATase cobBQ-type domain maps to 244-431 (KLNVVVPVLT…LHGFFDEADV (188 aa)). Cys325 functions as the Nucleophile in the catalytic mechanism. His423 is a catalytic residue.

It belongs to the CobB/CobQ family. CobQ subfamily.

It participates in cofactor biosynthesis; adenosylcobalamin biosynthesis. Its function is as follows. Catalyzes amidations at positions B, D, E, and G on adenosylcobyrinic A,C-diamide. NH(2) groups are provided by glutamine, and one molecule of ATP is hydrogenolyzed for each amidation. This is Cobyric acid synthase from Vibrio campbellii (strain ATCC BAA-1116).